We begin with the raw amino-acid sequence, 396 residues long: THAP domain-containing protein 5 (396 aa).

The THAP-type zinc-finger motif lies at 2-85 (MPRYCAAICC…LKQTAVPTIF (84 aa)). The interval 86-113 (SLPEDNQGKDPSKKKSQKKNLEDEKEVC) is disordered. Positions 91 to 113 (NQGKDPSKKKSQKKNLEDEKEVC) are enriched in basic and acidic residues. An HCFC1-binding motif (HBM) motif is present at residues 322–325 (EHSY). A coiled-coil region spans residues 349 to 382 (LELKEQQTLGRLKSLEALVRQLKQENWLSEENVK).

Interacts with HTRA2; under apoptotic conditions. Interacts with ABRAXAS2. In terms of processing, cleaved by HTRA2 during apoptosis.

The protein localises to the nucleus. Its function is as follows. Has sequence-specific DNA-binding activity and can function as transcriptional repressor (in vitro). May be a regulator of cell cycle: THAP5 overexpression in human cell lines causes cell cycle arrest at G2/M phase. The protein is THAP domain-containing protein 5 (THAP5) of Macaca fascicularis (Crab-eating macaque).